The following is a 190-amino-acid chain: MVDMSNVKLRIENIVASVDLFTDLNLEKVIEICPSSKYNPEEFPGIICRFDDPKVALLIFSSGKLVVTGAKSVDDIKRAVYKLIEMLKKIGAKFTREPQIDIQNMVFSGDIGMEFNLDAVALILPNCEYEPEQFPGVIYRVKEPRAVILLFSSGKIVCSGAKSEQDAWEAVKKLLRELEKYGLIEEEEEW.

2 tandem repeats follow at residues 11–87 (IENI…IEML) and 102–178 (IQNM…LREL).

The protein belongs to the TBP family.

In terms of biological role, general factor that plays a role in the activation of archaeal genes transcribed by RNA polymerase. Binds specifically to the TATA box promoter element which lies close to the position of transcription initiation. The polypeptide is TATA-box-binding protein (tbp) (Thermococcus kodakarensis (strain ATCC BAA-918 / JCM 12380 / KOD1) (Pyrococcus kodakaraensis (strain KOD1))).